The following is a 184-amino-acid chain: UPF0149 protein PP_5201 (184 aa).

This sequence belongs to the UPF0149 family.

This is UPF0149 protein PP_5201 from Pseudomonas putida (strain ATCC 47054 / DSM 6125 / CFBP 8728 / NCIMB 11950 / KT2440).